We begin with the raw amino-acid sequence, 175 residues long: Large ribosomal subunit protein uL10 (175 aa).

This sequence belongs to the universal ribosomal protein uL10 family. In terms of assembly, part of the ribosomal stalk of the 50S ribosomal subunit. The N-terminus interacts with L11 and the large rRNA to form the base of the stalk. The C-terminus forms an elongated spine to which L12 dimers bind in a sequential fashion forming a multimeric L10(L12)X complex.

Forms part of the ribosomal stalk, playing a central role in the interaction of the ribosome with GTP-bound translation factors. This Psychrobacter sp. (strain PRwf-1) protein is Large ribosomal subunit protein uL10.